A 468-amino-acid polypeptide reads, in one-letter code: MTLVKYACDYCRVRRVKCDGKKPCSRCIEHNFDCTYQQPLKKRGSKPIGTRSLKYIPKAKMFIDNKSCTAAAEILMKVPKKVIDQCLRLYHDNLYVIWPLLSYDDLHKLLDEEYNDHYVYWFLVALSAANLSDLQSELESEGGFSFTGKQLAVLCMSSRQQFDDLSGRDIFRIMTYYCLLRCFSQSSDVRNSYRLCREAIGLVIVAGLHREKAYESLSFREQQLLRKVYYLLLLTERYYSVYVHCVTSLDTTIAPPQPEFVTDPRLSLDSFFEMIRVFTVPGKCFFDALATESTSGSCTEDSLKKIWKELHTASLEIEPWSYGYVDISFSRHWIRALAWKLVFQMNGTKFFSNANNAHILVEIAKDMLDDIFLTPNNLYDVHGPGIPMKSLEVANALVDIVNKYDHNMKLEAWNILCDVSKFVFSLKHCNHKMFQRFSTKCQSALIDLPISRPLRLNDDSKDEDDIIP.

Positions 8–34 (CDYCRVRRVKCDGKKPCSRCIEHNFDC) form a DNA-binding region, zn(2)-C6 fungal-type. Positions 41-49 (KKRGSKPIG) match the Nuclear localization signal motif.

It belongs to the MAL13 family.

The protein resides in the nucleus. Regulates the coordinate transcription of structural MAL3S (maltase) and MAL3T (maltose permease) genes. In Saccharomyces cerevisiae (strain ATCC 204508 / S288c) (Baker's yeast), this protein is Maltose fermentation regulatory protein MAL33 (MAL33).